The primary structure comprises 95 residues: Transcription and mRNA export factor ENY2-2 (95 aa).

This sequence belongs to the ENY2 family. As to quaternary structure, component of the nuclear pore complex (NPC)-associated TREX-2 complex (transcription and export complex 2). Component of the SAGA transcription coactivator-HAT complex. Within the SAGA complex, participates in a subcomplex of SAGA called the DUB module (deubiquitination module).

Its subcellular location is the nucleus. It is found in the nucleoplasm. Its function is as follows. Involved in mRNA export coupled transcription activation by association with both the TREX-2 and the SAGA complexes. The transcription regulatory histone acetylation (HAT) complex SAGA is a multiprotein complex that activates transcription by remodeling chromatin and mediating histone acetylation and deubiquitination. Within the SAGA complex, participates in a subcomplex that specifically deubiquitinates histones. The SAGA complex is recruited to specific gene promoters by activators, where it is required for transcription. The TREX-2 complex functions in docking export-competent ribonucleoprotein particles (mRNPs) to the nuclear entrance of the nuclear pore complex (nuclear basket). TREX-2 participates in mRNA export and accurate chromatin positioning in the nucleus by tethering genes to the nuclear periphery. The sequence is that of Transcription and mRNA export factor ENY2-2 (eny2-2) from Salmo salar (Atlantic salmon).